We begin with the raw amino-acid sequence, 223 residues long: 23 kDa piroplasm membrane protein (223 aa).

A signal peptide spans methionine 1 to serine 19. Residues glycine 20–tyrosine 197 lie on the Extracellular side of the membrane. N-linked (GlcNAc...) asparagine glycosylation occurs at asparagine 69. A helical membrane pass occupies residues valine 198–valine 218. Topologically, residues lysine 219–lysine 223 are cytoplasmic.

Its subcellular location is the membrane. The sequence is that of 23 kDa piroplasm membrane protein from Theileria buffeli.